A 414-amino-acid chain; its full sequence is Tyrosine--tRNA ligase (414 aa).

Positions 57 to 66 match the 'HIGH' region motif; sequence PSAPDVHIGH. A 'KMSKS' region motif is present at residues 241–245; that stretch reads KMSKS. Position 244 (Lys-244) interacts with ATP. An S4 RNA-binding domain is found at 352–413; the sequence is VPLIDLLVTL…GKRKFAKLSL (62 aa).

Belongs to the class-I aminoacyl-tRNA synthetase family. TyrS type 2 subfamily. As to quaternary structure, homodimer.

The protein resides in the cytoplasm. The enzyme catalyses tRNA(Tyr) + L-tyrosine + ATP = L-tyrosyl-tRNA(Tyr) + AMP + diphosphate + H(+). Catalyzes the attachment of tyrosine to tRNA(Tyr) in a two-step reaction: tyrosine is first activated by ATP to form Tyr-AMP and then transferred to the acceptor end of tRNA(Tyr). This is Tyrosine--tRNA ligase from Shouchella clausii (strain KSM-K16) (Alkalihalobacillus clausii).